The following is a 500-amino-acid chain: L-arabinose isomerase (500 aa).

Residues Glu306, Glu333, His350, and His450 each coordinate Mn(2+).

The protein belongs to the arabinose isomerase family. As to quaternary structure, homohexamer. Mn(2+) is required as a cofactor.

The catalysed reaction is beta-L-arabinopyranose = L-ribulose. It participates in carbohydrate degradation; L-arabinose degradation via L-ribulose; D-xylulose 5-phosphate from L-arabinose (bacterial route): step 1/3. Catalyzes the conversion of L-arabinose to L-ribulose. In Escherichia coli O157:H7, this protein is L-arabinose isomerase.